A 172-amino-acid polypeptide reads, in one-letter code: uncharacterized protein (172 aa).

It belongs to the baculoviridae 19 kDa protein family.

This is an uncharacterized protein from Orgyia pseudotsugata multicapsid polyhedrosis virus (OpMNPV).